Consider the following 488-residue polypeptide: Arginine biosynthesis bifunctional protein ArgJ, mitochondrial (488 aa).

Substrate contacts are provided by Thr-227, Lys-250, Thr-261, Glu-340, Asn-483, and Ser-488. Thr-261 (nucleophile) is an active-site residue.

Belongs to the ArgJ family. Heterodimer of an alpha and a beta chain. In terms of processing, the alpha and beta chains are autoproteolytically processed from a single precursor protein within the mitochondrion.

Its subcellular location is the mitochondrion matrix. The catalysed reaction is N(2)-acetyl-L-ornithine + L-glutamate = N-acetyl-L-glutamate + L-ornithine. It carries out the reaction L-glutamate + acetyl-CoA = N-acetyl-L-glutamate + CoA + H(+). It functions in the pathway amino-acid biosynthesis; L-arginine biosynthesis; L-ornithine and N-acetyl-L-glutamate from L-glutamate and N(2)-acetyl-L-ornithine (cyclic): step 1/1. It participates in amino-acid biosynthesis; L-arginine biosynthesis; N(2)-acetyl-L-ornithine from L-glutamate: step 1/4. Its function is as follows. Catalyzes two activities which are involved in the cyclic version of arginine biosynthesis: the synthesis of acetylglutamate from glutamate and acetyl-CoA, and of ornithine by transacetylation between acetylornithine and glutamate. This Thalassiosira pseudonana (Marine diatom) protein is Arginine biosynthesis bifunctional protein ArgJ, mitochondrial.